Consider the following 107-residue polypeptide: Regulatory protein SoxS (107 aa).

One can recognise an HTH araC/xylS-type domain in the interval 8–106 (QDLIAWIDEH…DRTPSDYRHR (99 aa)). 2 consecutive DNA-binding regions (H-T-H motif) follow at residues 25 to 46 (DVVAKKSGYSKWYLQRMFRTVT) and 73 to 96 (IFDIAMDLGYVSQQTFSRVFRRQF).

The protein resides in the cytoplasm. Functionally, transcriptional activator of the superoxide response regulon of E.coli that includes at least 10 genes such as sodA, nfo, zwf and micF. Binds the DNA sequence 5'-GCACN(7)CAA-3'. It also facilitates the subsequent binding of RNA polymerase to the micF and the nfo promoters. The chain is Regulatory protein SoxS (soxS) from Escherichia coli O157:H7.